Here is a 372-residue protein sequence, read N- to C-terminus: L-selectin (372 aa).

The signal sequence occupies residues 1-28; it reads MVFPWRCQSAQRGSWSFLKLWIRTLLCC. Positions 29-38 are excised as a propeptide; sequence DLLPHHGTHC. The Extracellular segment spans residues 39–332; the sequence is WTYHYSERSM…FSKIKEGDYN (294 aa). Residues 55 to 155 enclose the C-type lectin domain; sequence KFCKHNYTDL…ACHKRKAALC (101 aa). Disulfide bonds link C57-C155, C128-C147, C128-C160, C160-C171, C165-C180, C182-C191, C197-C241, C227-C254, C259-C303, and C289-C316. Residues N60 and N104 are each glycosylated (N-linked (GlcNAc...) asparagine). Ca(2+) contacts are provided by E118, N120, E126, N143, and D144. An EGF-like domain is found at 156–192; that stretch reads YTASCQPESCNRHGECVETINNNTCICDPGYYGPQCQ. N-linked (GlcNAc...) asparagine glycosylation is present at N177. 2 Sushi domains span residues 195-256 and 257-318; these read IQCE…ICQV and IQCM…ICQK. 3 N-linked (GlcNAc...) asparagine glycosylation sites follow: N226, N246, and N278. A helical membrane pass occupies residues 333–355; that stretch reads PLFIPVAVMVTAFSGLAFIIWLA. Topologically, residues 356 to 372 are cytoplasmic; it reads RRLKKGKKSQERMDDPY.

The protein belongs to the selectin/LECAM family. Interaction with SELPLG/PSGL1 and PODXL2 is required for promoting recruitment and rolling of leukocytes. This interaction is dependent on the sialyl Lewis X glycan modification of SELPLG and PODXL2, and tyrosine sulfation modifications of SELPLG. Sulfation on 'Tyr-51' of SELPLG is important for L-selectin binding. Post-translationally, N-glycosylated. In terms of tissue distribution, expressed in peripheral blood mononuclear cells (PBMC), spleen and thymus.

It is found in the cell membrane. Functionally, calcium-dependent lectin that mediates cell adhesion by binding to glycoproteins on neighboring cells. Mediates the adherence of lymphocytes to endothelial cells of high endothelial venules in peripheral lymph nodes. Promotes initial tethering and rolling of leukocytes in endothelia. The chain is L-selectin (Sell) from Rattus norvegicus (Rat).